The sequence spans 759 residues: Secretin XpsD (759 aa).

The signal sequence occupies residues M1–G21. C22 carries N-palmitoyl cysteine lipidation. Residue C22 is the site of S-diacylglycerol cysteine attachment. Over residues V40–E51 the composition is skewed to low complexity. Residues V40–G69 form a disordered region. The N0 stretch occupies residues G92–A187. The tract at residues G189–S253 is N1. Residues G254–S323 form an N2 region. Residues G326 to D474 are N3. The segment at G352–V434 is disordered. Residues A392 to S401 are compositionally biased toward gly residues. The segment covering P425 to V434 has biased composition (polar residues). The tract at residues Q479–N734 is secretin. The segment at Q736–K759 is s domain.

Belongs to the bacterial secretin family. GSP D subfamily. As to quaternary structure, forms a cylindrical channel with 15 subunits. Binds to XpsN.

The protein localises to the cell outer membrane. Its function is as follows. Involved in a type II secretion system (T2SS, formerly general secretion pathway, GSP) for the export of proteins. This subunit forms the outer membrane channel. This is Secretin XpsD (xpsD) from Xanthomonas campestris pv. campestris (strain ATCC 33913 / DSM 3586 / NCPPB 528 / LMG 568 / P 25).